A 443-amino-acid chain; its full sequence is Transcriptional adapter 2-alpha (443 aa).

Phosphoserine is present on S6. The segment at S12–P69 adopts a ZZ-type zinc-finger fold. C17, C20, C31, C34, C42, C45, H55, and H59 together coordinate Zn(2+). The 53-residue stretch at V70 to P122 folds into the SANT domain. Residues K132 and K138 each participate in a glycyl lysine isopeptide (Lys-Gly) (interchain with G-Cter in SUMO2) cross-link. Polar residues predominate over residues L347 to R359. The segment at L347–G372 is disordered. The SWIRM domain maps to N356 to A443. The DNA-binding element occupies K426–I435.

As to quaternary structure, interacts with GCN5 and NR3C1. Associated with the P/CAF protein in the PCAF complex. Component of the PCAF complex, at least composed of TADA2L/ADA2, TADA3L/ADA3, TAF5L/PAF65-beta, TAF6L/PAF65-alpha, TAF10/TAFII30, TAF12/TAFII20, TAF9/TAFII31 and TRRAP. Component of the ADA2A-containing complex (ATAC), composed of KAT14, KAT2A, TADA2L, TADA3L, ZZ3, MBIP, WDR5, YEATS2, CCDC101 and DR1. Interacts with CCDC134.

Its subcellular location is the nucleus. It localises to the chromosome. Component of the ATAC complex, a complex with histone acetyltransferase activity on histones H3 and H4. Required for the function of some acidic activation domains, which activate transcription from a distant site. Binds double-stranded DNA. Binds dinucleosomes, probably at the linker region between neighboring nucleosomes. Plays a role in chromatin remodeling. May promote TP53/p53 'Lys-321' acetylation, leading to reduced TP53 stability and transcriptional activity. May also promote XRCC6 acetylation thus facilitating cell apoptosis in response to DNA damage. The protein is Transcriptional adapter 2-alpha (TADA2A) of Bos taurus (Bovine).